Reading from the N-terminus, the 1002-residue chain is TOG array regulator of axonemal microtubules protein 2 (1002 aa).

Disordered stretches follow at residues 54-74 (SSVL…EDQS), 131-214 (KRRL…SAQE), 332-351 (ETRS…KVQV), 402-421 (PLRG…PRRN), and 426-450 (LQRK…GFAR).

The protein belongs to the Crescerin family.

This Mus musculus (Mouse) protein is TOG array regulator of axonemal microtubules protein 2 (Togaram2).